Reading from the N-terminus, the 122-residue chain is Protein 7a (122 aa).

Residues 1–15 form the signal peptide; it reads MKIILFLTLIALATC. In terms of domain architecture, X4e spans 16-81; the sequence is ELYHYQECVR…RHTYQLRARS (66 aa). At 16–96 the chain is on the virion surface side; it reads ELYHYQECVR…FIRQEEVYQE (81 aa). 2 disulfides stabilise this stretch: Cys23–Cys58 and Cys35–Cys67. Residues 97–117 traverse the membrane as a helical segment; that stretch reads LYSPLFLIVAALVFIILCFTI. Over 118–122 the chain is Intravirion; that stretch reads KRKTE. The Di-lysine motif signature appears at 118-122; it reads KRKTE.

In terms of assembly, interacts with the spike glycoprotein, M protein, E protein and the accessory protein 3.

It localises to the virion. The protein localises to the host endoplasmic reticulum membrane. It is found in the host endoplasmic reticulum-Golgi intermediate compartment membrane. Its subcellular location is the host Golgi apparatus membrane. In terms of biological role, non-structural protein which is dispensable for virus replication in cell culture. In Bat coronavirus HKU3 (BtCoV), this protein is Protein 7a.